Here is a 441-residue protein sequence, read N- to C-terminus: Xylose isomerase (441 aa).

Residues His-100 and Asp-103 contribute to the active site. Mg(2+)-binding residues include Glu-231, Glu-267, His-270, Asp-295, Asp-306, Asp-308, and Asp-338.

It belongs to the xylose isomerase family. As to quaternary structure, homotetramer. Requires Mg(2+) as cofactor.

It localises to the cytoplasm. It catalyses the reaction alpha-D-xylose = alpha-D-xylulofuranose. The chain is Xylose isomerase from Paraburkholderia phymatum (strain DSM 17167 / CIP 108236 / LMG 21445 / STM815) (Burkholderia phymatum).